The sequence spans 392 residues: Obg-like ATPase 1 (392 aa).

The 265-residue stretch at 21-285 (LKTGIVGMPN…FTEEEAIEEC (265 aa)) folds into the OBG-type G domain. 30-35 (NVGKST) lines the ATP pocket. Mg(2+) is bound by residues Ser-34 and Thr-55. ATP is bound at residue Met-233. The TGS domain maps to 306–389 (NLINYFTCGE…ESGDIAHWKA (84 aa)).

This sequence belongs to the TRAFAC class OBG-HflX-like GTPase superfamily. OBG GTPase family. YchF/OLA1 subfamily. As to quaternary structure, monomer. Mg(2+) is required as a cofactor.

It is found in the cytoplasm. The protein resides in the nucleus. Functionally, hydrolyzes ATP, and can also hydrolyze GTP with lower efficiency. Has lower affinity for GTP. Negatively regulates the G2/M transition in the cell cycle. This is Obg-like ATPase 1 from Schizosaccharomyces pombe (strain 972 / ATCC 24843) (Fission yeast).